Here is a 148-residue protein sequence, read N- to C-terminus: Putative FAD-linked sulfhydryl oxidase 096R (148 aa).

One can recognise an ERV/ALR sulfhydryl oxidase domain in the interval 1–103 (MSIDPKLWGN…LAAKTVFQRY (103 aa)). Cys-48 and Cys-51 form a disulfide bridge. A helical transmembrane segment spans residues 122-142 (WSPWLTTALAVILVVVVAGIG).

It belongs to the IIV-6 347L family. FAD serves as cofactor.

The protein localises to the membrane. The catalysed reaction is 2 R'C(R)SH + O2 = R'C(R)S-S(R)CR' + H2O2. In terms of biological role, FAD-dependent sulfhydryl oxidase that catalyzes disulfide bond formation. This chain is Putative FAD-linked sulfhydryl oxidase 096R, found in Aedes vexans (Inland floodwater mosquito).